Here is a 203-residue protein sequence, read N- to C-terminus: Small ribosomal subunit protein uS4 (203 aa).

The region spanning 93–156 (QRLDNVVYRL…MKVPAILEAV (64 aa)) is the S4 RNA-binding domain.

This sequence belongs to the universal ribosomal protein uS4 family. In terms of assembly, part of the 30S ribosomal subunit. Contacts protein S5. The interaction surface between S4 and S5 is involved in control of translational fidelity.

Functionally, one of the primary rRNA binding proteins, it binds directly to 16S rRNA where it nucleates assembly of the body of the 30S subunit. In terms of biological role, with S5 and S12 plays an important role in translational accuracy. The chain is Small ribosomal subunit protein uS4 from Lactococcus lactis subsp. cremoris (strain MG1363).